Consider the following 1327-residue polypeptide: Vascular endothelial growth factor receptor 1 (1327 aa).

Residues 1–24 (MPRQLLSGTVLLGAAFLLAGSTSG) form the signal peptide. At 25–749 (SKLKVPVLSV…GTVERSNLEL (725 aa)) the chain is on the extracellular side. 7 Ig-like C2-type domains span residues 30–121 (PVLS…SIVY), 120–222 (VYVF…HRET), 227–323 (DIKL…TTVI), 331–417 (NLKR…LTVT), 424–545 (PQIY…RNVS), 552–644 (PSGF…KDVS), and 651–737 (PALL…AYVT). Asn-48, Asn-73, Asn-82, Asn-98, and Asn-125 each carry an N-linked (GlcNAc...) asparagine glycan. An intrachain disulfide couples Cys-51 to Cys-105. Cys-154 and Cys-203 form a disulfide bridge. The N-linked (GlcNAc...) asparagine glycan is linked to Asn-247. The cysteines at positions 248 and 307 are disulfide-linked. Residues Asn-319, Asn-383, Asn-398, Asn-409, Asn-413, Asn-470, Asn-512, Asn-543, Asn-593, Asn-615, and Asn-663 are each glycosylated (N-linked (GlcNAc...) asparagine). Cys-450 and Cys-531 are joined by a disulfide. A disulfide bridge links Cys-573 with Cys-626. Cys-672 and Cys-721 are disulfide-bonded. A helical transmembrane segment spans residues 750-770 (ITLTCTCVAATLFWLLLTLFI). The Cytoplasmic segment spans residues 771–1327 (RKLKRPYFSE…SVVHYSQPSI (557 aa)). The Protein kinase domain maps to 819–1151 (LKLGKSLGHG…ELVKRLGDLL (333 aa)). Residues 825–833 (LGHGAFGKV) and Lys-853 each bind ATP. The interval 950–971 (ASVTSSESFASSGFQEDKSLSD) is disordered. Low complexity predominate over residues 951-961 (SVTSSESFASS). The active-site Proton acceptor is Asp-1015. Residues Tyr-1046, Tyr-1162, Tyr-1202, Tyr-1231, Tyr-1316, and Tyr-1322 each carry the phosphotyrosine; by autocatalysis modification.

It belongs to the protein kinase superfamily. Tyr protein kinase family. CSF-1/PDGF receptor subfamily. Interacts with VEGFA, VEGFB and PGF. Monomer in the absence of bound VEGFA, VEGFB or PGF. Homodimer in the presence of bound VEGFA, VEGFB and PGF. In terms of processing, autophosphorylated on tyrosine residues upon ligand binding.

The protein resides in the cell membrane. It localises to the endosome. Its subcellular location is the secreted. The enzyme catalyses L-tyrosyl-[protein] + ATP = O-phospho-L-tyrosyl-[protein] + ADP + H(+). With respect to regulation, present in an inactive conformation in the absence of bound ligand. Binding of VEGFA, VEGFB or PGF leads to dimerization and activation by autophosphorylation on tyrosine residues. Tyrosine-protein kinase that acts as a cell-surface receptor for VEGFA, VEGFB and PGF, and plays an essential role in the regulation of angiogenesis, cell survival, cell migration, macrophage function, and chemotaxis. Acts as a positive regulator of postnatal retinal hyaloid vessel regression. Has very high affinity for VEGFA and relatively low protein kinase activity; may function as a negative regulator of VEGFA signaling by limiting the amount of free VEGFA and preventing its binding to KDR. Ligand binding leads to the activation of several signaling cascades. Activation of PLCG1 leads to the production of the cellular signaling molecules diacylglycerol and inositol 1,4,5-trisphosphate and the activation of protein kinase C. Mediates phosphorylation of PIK3R1, the regulatory subunit of phosphatidylinositol 3-kinase, leading to activation of phosphatidylinositol kinase and the downstream signaling pathway. Mediates activation of MAPK1/ERK2, MAPK3/ERK1 and the MAP kinase signaling pathway, as well as of the AKT1 signaling pathway. Phosphorylates PLCG1. Promotes phosphorylation of AKT1 and CBL. This is Vascular endothelial growth factor receptor 1 (FLT1) from Gallus gallus (Chicken).